A 123-amino-acid chain; its full sequence is Heat-labile enterotoxin IIA, B chain (123 aa).

The N-terminal stretch at 1–19 (MSSKKIIGAFVLMTGILSG) is a signal peptide. The cysteines at positions 33 and 104 are disulfide-linked.

In terms of assembly, heterohexamer of one A chain and of five B chains.

The biological activity of the toxin is produced by the A chain, which activates intracellular adenyl cyclase. The protein is Heat-labile enterotoxin IIA, B chain of Escherichia coli.